The primary structure comprises 136 residues: ATP synthase epsilon chain (136 aa).

This sequence belongs to the ATPase epsilon chain family. As to quaternary structure, F-type ATPases have 2 components, CF(1) - the catalytic core - and CF(0) - the membrane proton channel. CF(1) has five subunits: alpha(3), beta(3), gamma(1), delta(1), epsilon(1). CF(0) has three main subunits: a, b and c.

The protein localises to the cell inner membrane. Its function is as follows. Produces ATP from ADP in the presence of a proton gradient across the membrane. This is ATP synthase epsilon chain from Agrobacterium fabrum (strain C58 / ATCC 33970) (Agrobacterium tumefaciens (strain C58)).